We begin with the raw amino-acid sequence, 335 residues long: Tetraacyldisaccharide 4'-kinase (335 aa).

ATP is bound at residue 59–66 (TAGGNGKT).

Belongs to the LpxK family.

It catalyses the reaction a lipid A disaccharide + ATP = a lipid IVA + ADP + H(+). The protein operates within glycolipid biosynthesis; lipid IV(A) biosynthesis; lipid IV(A) from (3R)-3-hydroxytetradecanoyl-[acyl-carrier-protein] and UDP-N-acetyl-alpha-D-glucosamine: step 6/6. Transfers the gamma-phosphate of ATP to the 4'-position of a tetraacyldisaccharide 1-phosphate intermediate (termed DS-1-P) to form tetraacyldisaccharide 1,4'-bis-phosphate (lipid IVA). The polypeptide is Tetraacyldisaccharide 4'-kinase (Vibrio campbellii (strain ATCC BAA-1116)).